The chain runs to 570 residues: Proline--tRNA ligase (570 aa).

The protein belongs to the class-II aminoacyl-tRNA synthetase family. ProS type 1 subfamily. Homodimer.

The protein localises to the cytoplasm. The catalysed reaction is tRNA(Pro) + L-proline + ATP = L-prolyl-tRNA(Pro) + AMP + diphosphate. Functionally, catalyzes the attachment of proline to tRNA(Pro) in a two-step reaction: proline is first activated by ATP to form Pro-AMP and then transferred to the acceptor end of tRNA(Pro). As ProRS can inadvertently accommodate and process non-cognate amino acids such as alanine and cysteine, to avoid such errors it has two additional distinct editing activities against alanine. One activity is designated as 'pretransfer' editing and involves the tRNA(Pro)-independent hydrolysis of activated Ala-AMP. The other activity is designated 'posttransfer' editing and involves deacylation of mischarged Ala-tRNA(Pro). The misacylated Cys-tRNA(Pro) is not edited by ProRS. This Shewanella oneidensis (strain ATCC 700550 / JCM 31522 / CIP 106686 / LMG 19005 / NCIMB 14063 / MR-1) protein is Proline--tRNA ligase.